A 116-amino-acid polypeptide reads, in one-letter code: Protein aq_1857 (116 aa).

This sequence belongs to the HesB/IscA family.

This is Protein aq_1857 from Aquifex aeolicus (strain VF5).